The chain runs to 220 residues: Transmembrane emp24 domain-containing protein 1 (220 aa).

Positions M1–A19 are cleaved as a signal peptide. The Extracellular segment spans residues V20–N187. One can recognise a GOLD domain in the interval Q36–F118. The stretch at E138–M164 forms a coiled coil. The helical transmembrane segment at F188–L208 threads the bilayer. The Cytoplasmic segment spans residues K209–T220. A COPII vesicle coat-binding motif is present at residues L211–F212. A COPI vesicle coat-binding motif is present at residues L211–T220.

Belongs to the EMP24/GP25L family. As to quaternary structure, homodimer in endoplasmic reticulum, endoplasmic reticulum-Golgi intermediate compartment and cis-Golgi network. Interacts with IL1RL1. Interacts with RNF26; this interaction is important to modulate innate immune signaling through the cGAS-STING pathway.

The protein resides in the cell membrane. It localises to the endoplasmic reticulum membrane. It is found in the golgi apparatus. Its subcellular location is the cis-Golgi network membrane. The protein localises to the endoplasmic reticulum-Golgi intermediate compartment membrane. Functionally, potential role in vesicular protein trafficking, mainly in the early secretory pathway. May act as a cargo receptor at the lumenal side for incorporation of secretory cargo molecules into transport vesicles and may be involved in vesicle coat formation at the cytoplasmic side. Plays a positive role in IL-33-mediated IL-8 and IL-6 production by interacting with interleukin-33 receptor IL1RL1. Plays also a role in the modulation of innate immune signaling through the cGAS-STING pathway by interacting with RNF26. In Xenopus tropicalis (Western clawed frog), this protein is Transmembrane emp24 domain-containing protein 1 (tmed1).